The chain runs to 170 residues: MTDYIKDKAIAADFSSVQFRFDNYLKQNFNFGRSALLNSGNGRDSGSKMGSVVCKHWLRGLCKKGEQCDFLHEYNLKKMPPCHFYAERGWCSNGEECLYLHLDPSKQVGVCAWYNMGFCPLGPICRGKHVRKPRPCPKYLAGFCPLGPNCPDAHPKHSEPPHPPQKRKDW.

C3H1-type zinc fingers lie at residues 48–75 (KMGS…HEYN), 76–104 (LKKM…HLDP), 105–130 (SKQV…GKHV), and 131–157 (RKPR…HPKH).

Belongs to the CPSF4/YTH1 family.

It is found in the nucleus. Functionally, component of the cleavage factor I (CF I) involved in pre-mRNA 3'-end processing. The chain is mRNA 3'-end-processing protein yth1 (yth1) from Schizosaccharomyces pombe (strain 972 / ATCC 24843) (Fission yeast).